Reading from the N-terminus, the 219-residue chain is N-(5'-phosphoribosyl)anthranilate isomerase (219 aa).

It belongs to the TrpF family.

It catalyses the reaction N-(5-phospho-beta-D-ribosyl)anthranilate = 1-(2-carboxyphenylamino)-1-deoxy-D-ribulose 5-phosphate. It functions in the pathway amino-acid biosynthesis; L-tryptophan biosynthesis; L-tryptophan from chorismate: step 3/5. The sequence is that of N-(5'-phosphoribosyl)anthranilate isomerase from Mesorhizobium japonicum (strain LMG 29417 / CECT 9101 / MAFF 303099) (Mesorhizobium loti (strain MAFF 303099)).